The primary structure comprises 332 residues: 3-ketodihydrosphingosine reductase (332 aa).

Residues 1 to 25 (MLLLAAASLVAFVLLLYMVSPLISP) form the signal peptide. Residues 26 to 269 (KPLALPGAHV…QGNFNSSIGS (244 aa)) are Cytoplasmic-facing. Residues Gly39, Ser41, Ser42, Gly43, Arg64, Lys68, and Asp93 each coordinate NADPH. The GXSXG signature appears at 39–43 (GGSSG). Ser172 acts as the Proton donor in catalysis. The active-site Proton acceptor is Tyr186. Residues Tyr186 and Lys190 each contribute to the NADP(+) site. The Lowers pKa of active site Tyr role is filled by Lys190. A helical transmembrane segment spans residues 270–290 (DGYMLSSLTCGMAPVTSIMEG). Residues 291–292 (LQ) are Lumenal-facing. A helical transmembrane segment spans residues 293–313 (QVVTMGLFRTIALFYLGSFDS). Residues 314–331 (IVRRCMMQKAKLETVDKT) are Cytoplasmic-facing.

It belongs to the short-chain dehydrogenases/reductases (SDR) family.

The protein resides in the endoplasmic reticulum membrane. It catalyses the reaction sphinganine + NADP(+) = 3-oxosphinganine + NADPH + H(+). Its pathway is lipid metabolism; sphingolipid metabolism. In terms of biological role, catalyzes the reduction of 3'-oxosphinganine (3-ketodihydrosphingosine/KDS) to sphinganine (dihydrosphingosine/DHS), the second step of de novo sphingolipid biosynthesis. In Bos taurus (Bovine), this protein is 3-ketodihydrosphingosine reductase (KDSR).